A 450-amino-acid polypeptide reads, in one-letter code: MSKRIIQLILLSAFARANYVEPFKSNPYIACSEASHCPKEWPCCSQYGQCGSGPLCISGCNPKFSHSPESCVPVPALLPQLEIVASDDKGVYLEMSGQPALVTKFQRKSSAQLLEVHHEEQQYGVSALEQDLNSRGLIHFPDYMITSKPKVAREMLEQYDFIHSGFISVDGKSESLILGMPKKTTGSLISSSKVFLYGRAAVTMKTSRGPGVITAIVFMSSTQDEIDYEFVGSELHTVQTNYYYQGELNHSRMRRHSLPSNSHEEYHIYEVDWDAERIHWMVDGEIVRTLYKRDTWDPVHKIYKYPQTPMMLQISLWPAGTPDAPQGTIEWAGGLIDWENAPDIKAHGQLAAQIQRVAITPYNNDFCPEIHESMGQWGAQNSEEEPFRVAYGYESNNGRFDPKKLKWYTDARLHLSSWHATGIKPTAAQRQQHHRRSLPHVEAPPITNTM.

Positions 1–17 are cleaved as a signal peptide; that stretch reads MSKRIIQLILLSAFARA. Residues 67–347 form the GH16 domain; it reads SPESCVPVPA…WENAPDIKAH (281 aa). The active-site Nucleophile is glutamate 225. Glutamate 229 acts as the Proton donor in catalysis. The disordered stretch occupies residues 428–450; the sequence is AQRQQHHRRSLPHVEAPPITNTM.

Belongs to the glycosyl hydrolase 16 family. CRR1 subfamily.

Its subcellular location is the spore wall. Functionally, spore specific glycosidase involved in spore wall assembly during sporulation. May be involved in copper import. The sequence is that of Probable glycosidase CRR1 (CRR1) from Eremothecium gossypii (strain ATCC 10895 / CBS 109.51 / FGSC 9923 / NRRL Y-1056) (Yeast).